We begin with the raw amino-acid sequence, 166 residues long: NAD(P)H-quinone oxidoreductase subunit I, chloroplastic (166 aa).

2 consecutive 4Fe-4S ferredoxin-type domains span residues 55 to 84 (GRIHFEFDKCIACEVCVRVCPIDLPVVDWK) and 95 to 124 (LNYSIDFGICIFCGNCVEYCPTNCLSMTEE). Residues C64, C67, C70, C74, C104, C107, C110, and C114 each contribute to the [4Fe-4S] cluster site.

The protein belongs to the complex I 23 kDa subunit family. As to quaternary structure, NDH is composed of at least 16 different subunits, 5 of which are encoded in the nucleus. Requires [4Fe-4S] cluster as cofactor.

Its subcellular location is the plastid. It is found in the chloroplast thylakoid membrane. It carries out the reaction a plastoquinone + NADH + (n+1) H(+)(in) = a plastoquinol + NAD(+) + n H(+)(out). It catalyses the reaction a plastoquinone + NADPH + (n+1) H(+)(in) = a plastoquinol + NADP(+) + n H(+)(out). In terms of biological role, NDH shuttles electrons from NAD(P)H:plastoquinone, via FMN and iron-sulfur (Fe-S) centers, to quinones in the photosynthetic chain and possibly in a chloroplast respiratory chain. The immediate electron acceptor for the enzyme in this species is believed to be plastoquinone. Couples the redox reaction to proton translocation, and thus conserves the redox energy in a proton gradient. This is NAD(P)H-quinone oxidoreductase subunit I, chloroplastic from Oxypappus scaber.